The primary structure comprises 600 residues: DNA ligase (600 aa).

Residue D259 participates in ATP binding. K261 acts as the N6-AMP-lysine intermediate in catalysis. Positions 266, 281, 311, 351, 428, and 434 each coordinate ATP.

It belongs to the ATP-dependent DNA ligase family. Mg(2+) is required as a cofactor.

The catalysed reaction is ATP + (deoxyribonucleotide)n-3'-hydroxyl + 5'-phospho-(deoxyribonucleotide)m = (deoxyribonucleotide)n+m + AMP + diphosphate.. DNA ligase that seals nicks in double-stranded DNA during DNA replication, DNA recombination and DNA repair. The sequence is that of DNA ligase from Acidianus ambivalens (Desulfurolobus ambivalens).